Reading from the N-terminus, the 306-residue chain is Ribonuclease Z (306 aa).

Residues His-63, His-65, Asp-67, His-68, His-141, Asp-211, and His-269 each contribute to the Zn(2+) site. The Proton acceptor role is filled by Asp-67.

The protein belongs to the RNase Z family. In terms of assembly, homodimer. Zn(2+) is required as a cofactor.

It carries out the reaction Endonucleolytic cleavage of RNA, removing extra 3' nucleotides from tRNA precursor, generating 3' termini of tRNAs. A 3'-hydroxy group is left at the tRNA terminus and a 5'-phosphoryl group is left at the trailer molecule.. Its function is as follows. Zinc phosphodiesterase, which displays some tRNA 3'-processing endonuclease activity. Probably involved in tRNA maturation, by removing a 3'-trailer from precursor tRNA. The polypeptide is Ribonuclease Z (Staphylococcus epidermidis (strain ATCC 12228 / FDA PCI 1200)).